Here is a 719-residue protein sequence, read N- to C-terminus: Developmental regulator flbA (719 aa).

A compositionally biased stretch (polar residues) spans 1–17 (MPTSISTAPLSQGSPPS). Disordered stretches follow at residues 1–39 (MPTS…STAA), 117–141 (IGST…SRKA), and 155–190 (LSPP…AAER). 2 stretches are compositionally biased toward low complexity: residues 123 to 135 (SSLR…GSLQ) and 158 to 171 (PLSD…QSSS). The segment at 214–411 (QTSSRLLRMT…QDGPNVKSSV (198 aa)) is fungal-DR. A DEP domain is found at 425–511 (GLVGVKMARE…SKNAIYAITE (87 aa)). Residues 540–685 (SNNARLNHIL…FLRDPKYSAI (146 aa)) enclose the RGS domain. The segment at 694-719 (LIGGGRSYSPTPGNVPERSMSRSQRS) is disordered.

Its function is as follows. Required for asexual sporulation and normal colony development. May be involved in brlA activation. Could play a regulatory role in controlling the flug-initiated signal transduction pathway that triggers the asexual reproduction. The sequence is that of Developmental regulator flbA (flbA) from Emericella nidulans (strain FGSC A4 / ATCC 38163 / CBS 112.46 / NRRL 194 / M139) (Aspergillus nidulans).